A 674-amino-acid polypeptide reads, in one-letter code: UvrABC system protein C (674 aa).

The GIY-YIG domain occupies 16-95; the sequence is TNPGVYRFRD…IKEFKPRFNV (80 aa). The region spanning 207–242 is the UVR domain; it reads KRFTNKLEKQMAAAVARLDYEQAARIRDDITALRKV.

It belongs to the UvrC family. In terms of assembly, interacts with UvrB in an incision complex.

It is found in the cytoplasm. The UvrABC repair system catalyzes the recognition and processing of DNA lesions. UvrC both incises the 5' and 3' sides of the lesion. The N-terminal half is responsible for the 3' incision and the C-terminal half is responsible for the 5' incision. This Pseudarthrobacter chlorophenolicus (strain ATCC 700700 / DSM 12829 / CIP 107037 / JCM 12360 / KCTC 9906 / NCIMB 13794 / A6) (Arthrobacter chlorophenolicus) protein is UvrABC system protein C.